The sequence spans 397 residues: Proteinase-activated receptor 2 (397 aa).

The N-terminal stretch at 1–25 is a signal peptide; that stretch reads MRSLSLAWLLGGITLLAASASCNRT. The N-linked (GlcNAc...) asparagine glycan is linked to Asn-23. A propeptide spans 26–36 (removed for receptor activation); sequence VNAPGPNSKGR. The Extracellular portion of the chain corresponds to 37–71; that stretch reads SLIGRLDTPPPITGKGAPVEPGFSVDEFSASVLTG. A helical transmembrane segment spans residues 72 to 101; sequence KLTTVFLPVIYIIVFVIGLPSNGMALWVFF. Residues 102-108 are Cytoplasmic-facing; sequence FRTKKKH. Residues 109 to 137 form a helical membrane-spanning segment; it reads PAVIYMANLALADLLSVIWFPLKISYHLH. Residues 138 to 149 are Extracellular-facing; the sequence is GNDWTYGDALCK. Cys-148 and Cys-226 are disulfide-bonded. Residues 150–177 form a helical membrane-spanning segment; it reads VLIGFFYGNMYCSILFMTCLSVQRYWVI. Over 178–183 the chain is Cytoplasmic; the sequence is VNPMGH. Residues 184 to 211 traverse the membrane as a helical segment; that stretch reads SRKRANIAVGVSLAIWLLIFLVTIPLYV. Over 212–235 the chain is Extracellular; the sequence is MRQTIYIPALNITTCHDVLPEEVL. Asn-222 carries N-linked (GlcNAc...) asparagine glycosylation. Residues 236-269 traverse the membrane as a helical segment; that stretch reads VGDMFSYFLSLAIGVFLFPALLTASAYVLMIKTL. Over 270-277 the chain is Cytoplasmic; the sequence is RSSAMDEH. A helical membrane pass occupies residues 278-317; the sequence is SEKKRRRAIRLIITVLSMYFICFAPSNVLLVVHYFLIKSQ. Topologically, residues 318 to 323 are extracellular; it reads RQSHVY. The chain crosses the membrane as a helical span at residues 324–347; that stretch reads ALYLVALCLSTLNSCIDPFVYYFV. Residues 348 to 397 lie on the Cytoplasmic side of the membrane; that stretch reads SKDFRDQARNALLCRSVRTVKRMQISLTSNKFSRKSSSYSSSSTSVKTSY. The S-palmitoyl cysteine moiety is linked to residue Cys-361.

Belongs to the G-protein coupled receptor 1 family. In terms of assembly, interacts with TLR4, COPS5 and TMED2. Interacts with GNAQ, GNA11, GNA12, GNA13 and GNA14. A proteolytic cleavage generates a new N-terminus that functions as a tethered ligand. Activating serine proteases include trypsin, mast cell tryptase, coagulation factors VII and Xa, myeloblastin/PRTN3 and membrane-type serine protease 1/ST14. Proposed subsequent cleavage by serine proteases is leading to receptor deactivation and include neutrophil elastase and cathepsin G. At least in part, implicated proteases are also shown to activate the receptor; the glycosylation status of the receptor is thought to contribute to the difference. In terms of processing, N-glycosylated and sialylated. Post-translationally, multiple phosphorylated on serine and threonine residues in the cytoplasmic region upon receptor activation; required for receptor desensitization and recruitment of beta-arrestin. Monoubiquitinated by Cbl at the plasma membrane and in early endosomes; not required for receptor endocytosis but for translocation to late endosomes or lysosomes. Deubiquitination involves Stambp and Usp8; required for lysosomal trafficking and receptor degradation.

It is found in the cell membrane. Receptor for trypsin and trypsin-like enzymes coupled to G proteins. Its function is mediated through the activation of several signaling pathways including phospholipase C (PLC), intracellular calcium, mitogen-activated protein kinase (MAPK), I-kappaB kinase/NF-kappaB and Rho. Can also be transactivated by cleaved F2R/PAR1. Involved in modulation of inflammatory responses and regulation of innate and adaptive immunity, and acts as a sensor for proteolytic enzymes generated during infection. Generally is promoting inflammation. Can signal synergistically with TLR4 and probably TLR2 in inflammatory responses and modulates Tlr3 signaling. Has a protective role in establishing the endothelial barrier; the activity involves coagulation factor X. Regulates endothelial cell barrier integrity during neutrophil extravasation, probably following proteolytic cleavage by PRTN3. Proposed to have a bronchoprotective role in airway epithelium, but also shown to compromise the airway epithelial barrier by interrupting E-cadherin adhesion. Involved in the regulation of vascular tone; activation results in hypotension presumably mediated by vasodilation. Associates with a subset of G proteins alpha subunits such as GNAQ, GNA11, GNA14, GNA12 and GNA13, but probably not with G(o)-alpha, G(i) subunit alpha-1 and G(i) subunit alpha-2. Believed to be a class B receptor which internalizes as a complex with arrestin and traffic with it to endosomal vesicles, presumably as desensitized receptor, for extended periods of time. Mediates inhibition of TNF-alpha stimulated JNK phosphorylation via coupling to G GNAQ and GNA11; the function involves dissociation of RIPK1 and Tradd from TNFR1. Mediates phosphorylation of nuclear factor NF-kappa-B RELA subunit at 'Ser-536'; the function involves Ikbkb and is predominantly independent of G proteins. Involved in cellular migration. Involved in cytoskeletal rearrangement and chemotaxis through beta-arrestin-promoted scaffolds; the function is independent of GNAQ and GNA11 and involves promotion of cofilin dephosphorylation and actin filament severing. Induces redistribution of COPS5 from the plasma membrane to the cytosol and activation of the JNK cascade is mediated by Cops5. Involved in the recruitment of leukocytes to the sites of inflammation and is the major PAR receptor capable of modulating eosinophil function such as pro-inflammatory cytokine secretion, superoxide production and degranulation. During inflammation promotes dendritic cell maturation, trafficking to the lymph nodes and subsequent T-cell activation. Involved in antimicrobial response of innate immune cells; activation enhances phagocytosis of Gram-positive and killing of Gram-negative bacteria. Acts synergistically with interferon-gamma in enhancing antiviral responses. Probably mediates activation of pro-inflammatory and pro-fibrotic responses in fibroblasts, triggered by coagulation factor Xa (F10). Probably mediates activation of barrier protective signaling responses in endothelial cells, triggered by coagulation factor Xa (F10). In Rattus norvegicus (Rat), this protein is Proteinase-activated receptor 2 (F2rl1).